A 97-amino-acid polypeptide reads, in one-letter code: UPF0235 protein AZOSEA09540 (97 aa).

It belongs to the UPF0235 family.

The chain is UPF0235 protein AZOSEA09540 from Aromatoleum aromaticum (strain DSM 19018 / LMG 30748 / EbN1) (Azoarcus sp. (strain EbN1)).